The sequence spans 319 residues: NADH-quinone oxidoreductase subunit H 1 (319 aa).

Helical transmembrane passes span 1-21 (MIGL…LLVV), 77-97 (ILAP…VAFG), 107-127 (VGVL…MLGA), 147-167 (LAYE…AGSL), 179-199 (VWFV…GVAA), 214-234 (LVAG…FLGE), 238-258 (VLLV…GPWL), 262-282 (IWFG…RATL), and 293-313 (FAWK…GIVV).

This sequence belongs to the complex I subunit 1 family. In terms of assembly, NDH-1 is composed of 14 different subunits. Subunits NuoA, H, J, K, L, M, N constitute the membrane sector of the complex.

The protein localises to the cell inner membrane. The catalysed reaction is a quinone + NADH + 5 H(+)(in) = a quinol + NAD(+) + 4 H(+)(out). Functionally, NDH-1 shuttles electrons from NADH, via FMN and iron-sulfur (Fe-S) centers, to quinones in the respiratory chain. The immediate electron acceptor for the enzyme in this species is believed to be ubiquinone. Couples the redox reaction to proton translocation (for every two electrons transferred, four hydrogen ions are translocated across the cytoplasmic membrane), and thus conserves the redox energy in a proton gradient. This subunit may bind ubiquinone. The sequence is that of NADH-quinone oxidoreductase subunit H 1 from Rhodopseudomonas palustris (strain HaA2).